The chain runs to 657 residues: Threonine--tRNA ligase (657 aa).

One can recognise a TGS domain in the interval 1–62 (MALDITFPDG…AHSGQLQIMT (62 aa)). The tract at residues 240 to 538 (DHRVIGRDLD…LTEIYKGAFP (299 aa)) is catalytic. The Zn(2+) site is built by Cys-334, His-385, and His-515.

It belongs to the class-II aminoacyl-tRNA synthetase family. As to quaternary structure, homodimer. Zn(2+) is required as a cofactor.

Its subcellular location is the cytoplasm. It carries out the reaction tRNA(Thr) + L-threonine + ATP = L-threonyl-tRNA(Thr) + AMP + diphosphate + H(+). Its function is as follows. Catalyzes the attachment of threonine to tRNA(Thr) in a two-step reaction: L-threonine is first activated by ATP to form Thr-AMP and then transferred to the acceptor end of tRNA(Thr). Also edits incorrectly charged L-seryl-tRNA(Thr). The sequence is that of Threonine--tRNA ligase from Lacticaseibacillus paracasei (strain ATCC 334 / BCRC 17002 / CCUG 31169 / CIP 107868 / KCTC 3260 / NRRL B-441) (Lactobacillus paracasei).